The sequence spans 287 residues: Protease HtpX (287 aa).

The next 2 membrane-spanning stretches (helical) occupy residues 4 to 24 (IFLLIATNLAVLLVASIVMSI) and 33 to 53 (GGLLVFAAIFGFGGAFISLAI). A Zn(2+)-binding site is contributed by His139. Residue Glu140 is part of the active site. A Zn(2+)-binding site is contributed by His143. Transmembrane regions (helical) follow at residues 154-174 (LIQGVVNTFVIFAARVVAGII) and 195-215 (AVVFVLDMLFGILASIIVAYF). Glu220 serves as a coordination point for Zn(2+).

Belongs to the peptidase M48B family. The cofactor is Zn(2+).

The protein resides in the cell inner membrane. The chain is Protease HtpX from Shewanella putrefaciens (strain CN-32 / ATCC BAA-453).